A 209-amino-acid polypeptide reads, in one-letter code: Chaperone protein TorD (209 aa).

It belongs to the TorD/DmsD family. TorD subfamily.

Its subcellular location is the cytoplasm. Involved in the biogenesis of TorA. Acts on TorA before the insertion of the molybdenum cofactor and, as a result, probably favors a conformation of the apoenzyme that is competent for acquiring the cofactor. In Shewanella massilia, this protein is Chaperone protein TorD.